We begin with the raw amino-acid sequence, 192 residues long: Ion-translocating oxidoreductase complex subunit A (192 aa).

6 helical membrane passes run 5-25, 39-59, 65-85, 102-122, 134-154, and 171-191; these read LLLL…FLGL, IGMS…SYLV, LPFE…AVVV, ALGI…VALL, AIYG…FSAM, and AIAM…TGLV.

Belongs to the NqrDE/RnfAE family. In terms of assembly, the complex is composed of six subunits: RnfA, RnfB, RnfC, RnfD, RnfE and RnfG.

It localises to the cell inner membrane. Part of a membrane-bound complex that couples electron transfer with translocation of ions across the membrane. This is Ion-translocating oxidoreductase complex subunit A from Shewanella sediminis (strain HAW-EB3).